A 381-amino-acid polypeptide reads, in one-letter code: E3 ubiquitin-protein ligase Fancl (381 aa).

The UBC-RWD region (URD) stretch occupies residues N110 to P293. The segment at E303 to S374 adopts an RING-CH-type; degenerate zinc-finger fold. Residues C311, C314, C329, C334, H339, C342, C364, and C367 each coordinate Zn(2+).

Interacts (via C-terminus) with FANCI and Fancd2.

The protein resides in the nucleus. The catalysed reaction is S-ubiquitinyl-[E2 ubiquitin-conjugating enzyme]-L-cysteine + [acceptor protein]-L-lysine = [E2 ubiquitin-conjugating enzyme]-L-cysteine + N(6)-ubiquitinyl-[acceptor protein]-L-lysine.. Its pathway is protein modification; protein ubiquitination. In terms of biological role, ubiquitin ligase protein that mediates monoubiquitination of Fancd2. Ubiquitination of Fancd2 is stimulated by ionising radiation. Together with Fancd2, and probably FANCI, involved in DNA repair of damage caused by agents that induce interstrand cross-links but not agents that cause double strand breaks. The protein is E3 ubiquitin-protein ligase Fancl of Drosophila melanogaster (Fruit fly).